Reading from the N-terminus, the 463-residue chain is L-seryl-tRNA(Sec) selenium transferase (463 aa).

Lys-294 is modified (N6-(pyridoxal phosphate)lysine).

It belongs to the SelA family. Pyridoxal 5'-phosphate is required as a cofactor.

The protein resides in the cytoplasm. The catalysed reaction is L-seryl-tRNA(Sec) + selenophosphate + H(+) = L-selenocysteinyl-tRNA(Sec) + phosphate. It functions in the pathway aminoacyl-tRNA biosynthesis; selenocysteinyl-tRNA(Sec) biosynthesis; selenocysteinyl-tRNA(Sec) from L-seryl-tRNA(Sec) (bacterial route): step 1/1. Its function is as follows. Converts seryl-tRNA(Sec) to selenocysteinyl-tRNA(Sec) required for selenoprotein biosynthesis. The sequence is that of L-seryl-tRNA(Sec) selenium transferase from Hyphomonas neptunium (strain ATCC 15444).